Reading from the N-terminus, the 310-residue chain is Transcriptional regulator NRG1 (310 aa).

The disordered stretch occupies residues 85–131; sequence YYMGPPAQHRLPTPPPYPMSSPTTATAATPLSQQSPHLQPQQTLQQP. Positions 104–131 are enriched in low complexity; sequence SSPTTATAATPLSQQSPHLQPQQTLQQP. C2H2-type zinc fingers lie at residues 228 to 250 and 256 to 280; these read HVCK…NRIH and HQCP…YKTH.

It is found in the nucleus. In terms of biological role, transcriptional repressor that binds NRG1 response elements (NRE) of target promoters. Involved in regulation of chlamydospore formation, hyphal growth, virulence, and stress response. Plays a key role in regulating true hyphal growth, but does not regulate pseudohyphal growth in the same fashion. Directs transcriptional repression of a subset of filament-specific genes such as HWP1, HYR1, ALS8, HWP1, or ECE1; via the TUP1 pathway. Functions with UME6 in a negative feedback loop to control the level and duration of filament-specific gene expression in response to inducing conditions. Plays a key role in biofilm formation and dispersion. Also plays the role of a negative regulator of virulence in mice models. Required for the expression of the cell wall genes RBR1. This chain is Transcriptional regulator NRG1 (NRG1), found in Candida albicans (strain SC5314 / ATCC MYA-2876) (Yeast).